A 361-amino-acid chain; its full sequence is Histidine biosynthesis bifunctional protein HisB (361 aa).

Residues 1–172 (MTQPTLFIDR…PKTTACKRPP (172 aa)) are histidinol-phosphatase. Residue aspartate 9 is the Nucleophile of the active site. Positions 9 and 11 each coordinate Mg(2+). The Proton donor role is filled by aspartate 11. Zn(2+) is bound by residues cysteine 92, histidine 94, cysteine 100, and cysteine 102. Residue aspartate 129 participates in Mg(2+) binding. An imidazoleglycerol-phosphate dehydratase region spans residues 173–361 (RYAEVVRTTK…NELPSSKGVL (189 aa)).

This sequence in the N-terminal section; belongs to the histidinol-phosphatase family. The protein in the C-terminal section; belongs to the imidazoleglycerol-phosphate dehydratase family. Mg(2+) is required as a cofactor. It depends on Zn(2+) as a cofactor.

It is found in the cytoplasm. It catalyses the reaction D-erythro-1-(imidazol-4-yl)glycerol 3-phosphate = 3-(imidazol-4-yl)-2-oxopropyl phosphate + H2O. The catalysed reaction is L-histidinol phosphate + H2O = L-histidinol + phosphate. It functions in the pathway amino-acid biosynthesis; L-histidine biosynthesis; L-histidine from 5-phospho-alpha-D-ribose 1-diphosphate: step 6/9. The protein operates within amino-acid biosynthesis; L-histidine biosynthesis; L-histidine from 5-phospho-alpha-D-ribose 1-diphosphate: step 8/9. The polypeptide is Histidine biosynthesis bifunctional protein HisB (Actinobacillus pleuropneumoniae serotype 3 (strain JL03)).